Here is a 21-residue protein sequence, read N- to C-terminus: Fibrinogen beta chain (21 aa).

Gln1 is subject to Pyrrolidone carboxylic acid. Residues 1 to 10 (QFPTDYDEGQ) show a composition bias toward acidic residues. Positions 1–21 (QFPTDYDEGQDDRPKLGLGAR) are disordered. Thr4 carries O-linked (GalNAc...) threonine glycosylation. Sulfotyrosine is present on Tyr6.

Heterohexamer; disulfide linked. Contains 2 sets of 3 non-identical chains (alpha, beta and gamma). The 2 heterotrimers are in head to head conformation with the N-termini in a small central domain. Post-translationally, conversion of fibrinogen to fibrin is triggered by thrombin, which cleaves fibrinopeptides A and B from alpha and beta chains, and thus exposes the N-terminal polymerization sites responsible for the formation of the soft clot.

It is found in the secreted. Its function is as follows. Cleaved by the protease thrombin to yield monomers which, together with fibrinogen alpha (FGA) and fibrinogen gamma (FGG), polymerize to form an insoluble fibrin matrix. Fibrin has a major function in hemostasis as one of the primary components of blood clots. In addition, functions during the early stages of wound repair to stabilize the lesion and guide cell migration during re-epithelialization. Was originally thought to be essential for platelet aggregation, based on in vitro studies using anticoagulated blood. However subsequent studies have shown that it is not absolutely required for thrombus formation in vivo. Enhances expression of SELP in activated platelets. Maternal fibrinogen is essential for successful pregnancy. Fibrin deposition is also associated with infection, where it protects against IFNG-mediated hemorrhage. May also facilitate the antibacterial immune response via both innate and T-cell mediated pathways. This is Fibrinogen beta chain (FGB) from Bubalus bubalis (Domestic water buffalo).